The primary structure comprises 249 residues: Cysteine-rich secretory protein 1 (249 aa).

The first 20 residues, 1–20 (MEIKHLLFLVAAACLLPVLS), serve as a signal peptide directing secretion. The SCP domain maps to 45 to 175 (VNIHNTLRRG…SPRYFYVCHY (131 aa)). A glycan (N-linked (GlcNAc...) asparagine) is linked at asparagine 104. Cystine bridges form between cysteine 195-cysteine 202, cysteine 198-cysteine 207, cysteine 211-cysteine 244, cysteine 220-cysteine 238, and cysteine 229-cysteine 242. In terms of domain architecture, ShKT spans 211–244 (CIYYDEYTDCSLEVRFLGCNHSTPRMFCKATCLC). The N-linked (GlcNAc...) asparagine glycan is linked to asparagine 230.

It belongs to the CRISP family. Expressed in all the regions of the epididymis except the caput and is not detected in the testis, prostate, seminal vesicle, and brain.

In terms of biological role, may have a role in sperm-egg fusion and maturation. This is Cysteine-rich secretory protein 1 (CRISP1) from Macaca mulatta (Rhesus macaque).